Consider the following 439-residue polypeptide: GTPase Der (439 aa).

EngA-type G domains are found at residues 4–168 and 177–352; these read PIVA…KDDE and INIA…DNYT. Residues 10-17, 57-61, 120-123, 183-190, 230-234, and 295-298 each bind GTP; these read GRPNVGKS, DTGGI, NKID, GKPNVGKS, DTAGL, and NKWD. The region spanning 353–437 is the KH-like domain; it reads KRVKTGVLND…GIKLEFRERK (85 aa).

The protein belongs to the TRAFAC class TrmE-Era-EngA-EngB-Septin-like GTPase superfamily. EngA (Der) GTPase family. Associates with the 50S ribosomal subunit.

In terms of biological role, GTPase that plays an essential role in the late steps of ribosome biogenesis. The protein is GTPase Der of Clostridium botulinum (strain Langeland / NCTC 10281 / Type F).